A 116-amino-acid polypeptide reads, in one-letter code: Large ribosomal subunit protein bL20 (116 aa).

Belongs to the bacterial ribosomal protein bL20 family.

Its function is as follows. Binds directly to 23S ribosomal RNA and is necessary for the in vitro assembly process of the 50S ribosomal subunit. It is not involved in the protein synthesizing functions of that subunit. The sequence is that of Large ribosomal subunit protein bL20 from Picosynechococcus sp. (strain ATCC 27264 / PCC 7002 / PR-6) (Agmenellum quadruplicatum).